Reading from the N-terminus, the 146-residue chain is UPF0735 ACT domain-containing protein Cphy_3604 (146 aa).

Residues 70–145 (TFMLQMDDIP…GIHYLKILGR (76 aa)) enclose the ACT domain.

The protein belongs to the UPF0735 family.

This Lachnoclostridium phytofermentans (strain ATCC 700394 / DSM 18823 / ISDg) (Clostridium phytofermentans) protein is UPF0735 ACT domain-containing protein Cphy_3604.